Here is a 167-residue protein sequence, read N- to C-terminus: Iron-sulfur cluster assembly protein 1 (167 aa).

The transit peptide at 1-50 (MMLKQAAKKALGLTSRQSTPWSVGILRTYHENVIDHYDNPRNVGSFDKND) directs the protein to the mitochondrion.

This sequence belongs to the NifU family. In terms of assembly, component of the core Fe-S cluster (ISC) assembly machinery. Interacts with HSCB. The cofactor is [2Fe-2S] cluster. In terms of tissue distribution, expressed in roots, stems, leaves, flowers, pollen and siliques.

It localises to the mitochondrion matrix. The protein resides in the cytoplasm. The protein localises to the cytosol. Its pathway is cofactor biosynthesis; iron-sulfur cluster biosynthesis. Its function is as follows. Scaffold protein for the de novo synthesis of iron-sulfur (Fe-S) clusters within mitochondria, which is required for maturation of both mitochondrial and cytoplasmic [2Fe-2S] and [4Fe-4S] proteins. First, a [2Fe-2S] cluster is transiently assembled on the scaffold protein ISCU (ISU1, ISU2 or ISU3). In a second step, the cluster is released from ISCU, transferred to a glutaredoxin, followed by the formation of mitochondrial [2Fe-2S] proteins, the synthesis of [4Fe-4S] clusters and their target-specific insertion into the recipient apoproteins. Cluster assembly on ISCU depends on the function of the cysteine desulfurase complex NFS1-ISD11, which serves as the sulfur donor for cluster synthesis, the iron-binding protein frataxin as the putative iron donor, and the electron transfer chain comprised of ferredoxin reductase and ferredoxin, which receive their electrons from NADH. The sequence is that of Iron-sulfur cluster assembly protein 1 (ISU1) from Arabidopsis thaliana (Mouse-ear cress).